We begin with the raw amino-acid sequence, 573 residues long: Phosphomethylpyrimidine synthase (573 aa).

Residues Asn190, Met219, Tyr248, His284, 304 to 306, 345 to 348, and Glu384 each bind substrate; these read SRG and DGLR. Residue His388 participates in Zn(2+) binding. Residue Tyr411 participates in substrate binding. His452 contributes to the Zn(2+) binding site. Positions 532, 535, and 540 each coordinate [4Fe-4S] cluster.

It belongs to the ThiC family. [4Fe-4S] cluster serves as cofactor.

It catalyses the reaction 5-amino-1-(5-phospho-beta-D-ribosyl)imidazole + S-adenosyl-L-methionine = 4-amino-2-methyl-5-(phosphooxymethyl)pyrimidine + CO + 5'-deoxyadenosine + formate + L-methionine + 3 H(+). Its pathway is cofactor biosynthesis; thiamine diphosphate biosynthesis. Catalyzes the synthesis of the hydroxymethylpyrimidine phosphate (HMP-P) moiety of thiamine from aminoimidazole ribotide (AIR) in a radical S-adenosyl-L-methionine (SAM)-dependent reaction. The chain is Phosphomethylpyrimidine synthase from Geobacillus sp. (strain WCH70).